Here is a 448-residue protein sequence, read N- to C-terminus: uncharacterized protein (448 aa).

As to expression, component of the acid-insoluble and acid-soluble organic matrix of the aragonitic skeleton (at protein level).

It localises to the secreted. This is an uncharacterized protein from Acropora millepora (Staghorn coral).